The following is a 189-amino-acid chain: H/ACA ribonucleoprotein complex subunit 1-like protein 2 (189 aa).

Residues 1 to 12 are compositionally biased toward gly residues; sequence MRPPRGGGSFRG. Disordered stretches follow at residues 1-39 and 129-189; these read MRPPRGGGSFRGRGGRDNGGRGRGRGRGRGRFGGGNYDE and RFLP…RGRA. Over residues 162–177 the composition is skewed to low complexity; the sequence is GRGAPRGASRGFQPRG.

Belongs to the GAR1 family. As to quaternary structure, component of the small nucleolar ribonucleoprotein particle containing H/ACA-type snoRNAs (H/ACA snoRNPs).

It is found in the nucleus. It localises to the nucleolus. Functionally, required for ribosome biogenesis. Part of a complex which catalyzes pseudouridylation of rRNA. This involves the isomerization of uridine such that the ribose is subsequently attached to C5, instead of the normal N1. Pseudouridine ('psi') residues may serve to stabilize the conformation of rRNAs. The polypeptide is H/ACA ribonucleoprotein complex subunit 1-like protein 2 (Arabidopsis thaliana (Mouse-ear cress)).